Reading from the N-terminus, the 607-residue chain is Nexilin (607 aa).

Over residues 1 to 14 (MNDVSQKAEIKEML) the composition is skewed to basic and acidic residues. Disordered stretches follow at residues 1 to 143 (MNDV…EDKM) and 165 to 268 (ETEA…RRRI). The residue at position 16 (S16) is a Phosphoserine. 4 stretches are compositionally biased toward basic and acidic residues: residues 40–85 (GKFD…RAEQ), 120–143 (KTKDPEDLDREEGNGRTNHEEDKM), 167–221 (EAKK…HMVN), and 228–268 (DRET…RRRI). Position 172 is a phosphoserine (S172). Residues S281, S288, and S296 each carry the phosphoserine modification. Residue T301 is modified to Phosphothreonine. 2 disordered regions span residues 419–444 (NFHEDDDVDVRPAKKSESPFTHKVNM) and 480–514 (AALQKKREDEEEEEGSIVNGSTTEDEEQTRSGAPW). A phosphoserine mark is found at S495 and S500. At T502 the chain carries Phosphothreonine. The 89-residue stretch at 513–601 (PWFKKPLRNT…GSAASTCILT (89 aa)) folds into the Ig-like domain.

Interacts with F-actin.

It is found in the cytoplasm. The protein localises to the cytoskeleton. The protein resides in the cell junction. Its subcellular location is the adherens junction. It localises to the myofibril. It is found in the sarcomere. The protein localises to the z line. Functionally, involved in regulating cell migration through association with the actin cytoskeleton. Has an essential role in the maintenance of Z line and sarcomere integrity. The protein is Nexilin of Mus musculus (Mouse).